A 978-amino-acid chain; its full sequence is Alanine--tRNA ligase, chloroplastic/mitochondrial (978 aa).

Histidine 655, histidine 659, cysteine 758, and histidine 762 together coordinate Zn(2+). Lysine 773 participates in a covalent cross-link: Glycyl lysine isopeptide (Lys-Gly) (interchain with G-Cter in ubiquitin).

Belongs to the class-II aminoacyl-tRNA synthetase family. Monomer. Zn(2+) serves as cofactor.

It is found in the plastid. It localises to the chloroplast. Its subcellular location is the mitochondrion. It carries out the reaction tRNA(Ala) + L-alanine + ATP = L-alanyl-tRNA(Ala) + AMP + diphosphate. Catalyzes the attachment of alanine to tRNA(Ala) in a two-step reaction: alanine is first activated by ATP to form Ala-AMP and then transferred to the acceptor end of tRNA(Ala). Also edits incorrectly charged tRNA(Ala) via its editing domain. This Arabidopsis thaliana (Mouse-ear cress) protein is Alanine--tRNA ligase, chloroplastic/mitochondrial (EMB86).